Reading from the N-terminus, the 93-residue chain is Small ribosomal subunit protein bS20 (93 aa).

Over residues 1–11 (MPQHKSAEKRV) the composition is skewed to basic and acidic residues. A disordered region spans residues 1 to 23 (MPQHKSAEKRVRQSKRRNARNRV). Residues 12–23 (RQSKRRNARNRV) are compositionally biased toward basic residues.

Belongs to the bacterial ribosomal protein bS20 family.

Functionally, binds directly to 16S ribosomal RNA. This chain is Small ribosomal subunit protein bS20, found in Chloroherpeton thalassium (strain ATCC 35110 / GB-78).